A 144-amino-acid polypeptide reads, in one-letter code: (R)-specific enoyl-CoA hydratase (144 aa).

The MaoC-like domain occupies 13–128 (DIKEGQSASL…TFRTTCTVAG (116 aa)).

Homotetramer.

It carries out the reaction a (3R)-3-hydroxyacyl-CoA = a (2E)-enoyl-CoA + H2O. Its function is as follows. Catalyzes the hydration of trans-2-enoyl-CoAs with a chain-length of 4-6 carbon atoms, forming the corresponding (3R)-3-hydroxyacyl-CoAs, which can then be utilized for the production of polyhydroxyalkanoates (PHA) polymers. Cannot use trans-2,3-octenoyl-CoA as substrate. The polypeptide is (R)-specific enoyl-CoA hydratase (Rhodospirillum rubrum (strain ATCC 11170 / ATH 1.1.1 / DSM 467 / LMG 4362 / NCIMB 8255 / S1)).